A 169-amino-acid chain; its full sequence is Cell division inhibitor SulA (169 aa).

The interval 106–112 is ftsZ binding; sequence ALRTGNY. The lon protease binding stretch occupies residues 162–169; sequence KIHSNLYH.

It belongs to the SulA family. Interacts with FtsZ. Post-translationally, is rapidly cleaved and degraded by the Lon protease once DNA damage is repaired.

Its function is as follows. Component of the SOS system and an inhibitor of cell division. Accumulation of SulA causes rapid cessation of cell division and the appearance of long, non-septate filaments. In the presence of GTP, binds a polymerization-competent form of FtsZ in a 1:1 ratio, thus inhibiting FtsZ polymerization and therefore preventing it from participating in the assembly of the Z ring. This mechanism prevents the premature segregation of damaged DNA to daughter cells during cell division. The sequence is that of Cell division inhibitor SulA from Escherichia fergusonii (strain ATCC 35469 / DSM 13698 / CCUG 18766 / IAM 14443 / JCM 21226 / LMG 7866 / NBRC 102419 / NCTC 12128 / CDC 0568-73).